The primary structure comprises 305 residues: Glycine--tRNA ligase alpha subunit (305 aa).

This sequence belongs to the class-II aminoacyl-tRNA synthetase family. As to quaternary structure, tetramer of two alpha and two beta subunits.

It is found in the cytoplasm. The catalysed reaction is tRNA(Gly) + glycine + ATP = glycyl-tRNA(Gly) + AMP + diphosphate. The polypeptide is Glycine--tRNA ligase alpha subunit (Streptococcus pneumoniae (strain CGSP14)).